Here is a 54-residue protein sequence, read N- to C-terminus: Ovomucoid (54 aa).

The Kazal-like domain maps to 4–54 (VDCSDYPKPSCTLEDKPLCGSDNQTYSNKCSFCNAVVDSNGTLTLSHFGKC). Intrachain disulfides connect cysteine 6–cysteine 36, cysteine 14–cysteine 33, and cysteine 22–cysteine 54. N-linked (GlcNAc...) asparagine glycosylation is present at asparagine 43.

The protein resides in the secreted. The chain is Ovomucoid from Megapodius freycinet (Dusky scrubfowl).